The following is a 298-amino-acid chain: MATKIELIKELRKSTQASVMDCKQALEKNNDDFEKAVKWLRENGIVKSTKKLNKVASEGIIVLKSNLHKAIMVEINSQTDFVAKNQELKEFSDLMLEKIFEKVNPKTELVEIEKIQINNDEKVSEKLALIASKTDEKIVLRRVVVFETKTNQIFTYLHANKRIGVIIEIQGKLNEDDGKHLAMHIAANSPQFIDQSDVNQTWLQNERNIIRSQAELEVKENPKKAIFLEKTIEGRVNKLLIDTCLINQKYLIDETKTIGQFLKEKQAKVLKFIRYEVGEGIIKETVDFVSEVNAQIKQ.

Positions 79–82 (TDFV) are involved in Mg(2+) ion dislocation from EF-Tu.

Belongs to the EF-Ts family.

It is found in the cytoplasm. Its function is as follows. Associates with the EF-Tu.GDP complex and induces the exchange of GDP to GTP. It remains bound to the aminoacyl-tRNA.EF-Tu.GTP complex up to the GTP hydrolysis stage on the ribosome. The protein is Elongation factor Ts (tsf) of Mycoplasma genitalium (strain ATCC 33530 / DSM 19775 / NCTC 10195 / G37) (Mycoplasmoides genitalium).